The sequence spans 573 residues: 2-succinyl-5-enolpyruvyl-6-hydroxy-3-cyclohexene-1-carboxylate synthase (573 aa).

This sequence belongs to the TPP enzyme family. MenD subfamily. In terms of assembly, homodimer. It depends on Mg(2+) as a cofactor. The cofactor is Mn(2+). Requires thiamine diphosphate as cofactor.

It catalyses the reaction isochorismate + 2-oxoglutarate + H(+) = 5-enolpyruvoyl-6-hydroxy-2-succinyl-cyclohex-3-ene-1-carboxylate + CO2. The protein operates within quinol/quinone metabolism; 1,4-dihydroxy-2-naphthoate biosynthesis; 1,4-dihydroxy-2-naphthoate from chorismate: step 2/7. It functions in the pathway quinol/quinone metabolism; menaquinone biosynthesis. Functionally, catalyzes the thiamine diphosphate-dependent decarboxylation of 2-oxoglutarate and the subsequent addition of the resulting succinic semialdehyde-thiamine pyrophosphate anion to isochorismate to yield 2-succinyl-5-enolpyruvyl-6-hydroxy-3-cyclohexene-1-carboxylate (SEPHCHC). In Shewanella sp. (strain MR-4), this protein is 2-succinyl-5-enolpyruvyl-6-hydroxy-3-cyclohexene-1-carboxylate synthase.